A 394-amino-acid polypeptide reads, in one-letter code: Phosphoglycerate kinase (394 aa).

Substrate-binding positions include 21 to 23, Arg-36, 59 to 62, Arg-118, and Arg-151; these read DFN and HLGR. At Ser-183 the chain carries Phosphoserine. Lys-201 contributes to the ATP binding site. Thr-299 carries the post-translational modification Phosphothreonine. Residues Glu-323 and 350–353 contribute to the ATP site; that span reads GGDS.

Belongs to the phosphoglycerate kinase family. Monomer.

Its subcellular location is the cytoplasm. The catalysed reaction is (2R)-3-phosphoglycerate + ATP = (2R)-3-phospho-glyceroyl phosphate + ADP. It functions in the pathway carbohydrate degradation; glycolysis; pyruvate from D-glyceraldehyde 3-phosphate: step 2/5. This is Phosphoglycerate kinase from Shouchella clausii (strain KSM-K16) (Alkalihalobacillus clausii).